Consider the following 368-residue polypeptide: Glutamate 5-kinase (368 aa).

Lys9 provides a ligand contact to ATP. Substrate contacts are provided by Ser49, Asp136, and Asn148. Residues 168-169 (TD) and 210-216 (TGGMMTK) each bind ATP. A PUA domain is found at 275–353 (AGIITIDNGA…ADIENVLGYE (79 aa)).

Belongs to the glutamate 5-kinase family.

The protein localises to the cytoplasm. The catalysed reaction is L-glutamate + ATP = L-glutamyl 5-phosphate + ADP. It functions in the pathway amino-acid biosynthesis; L-proline biosynthesis; L-glutamate 5-semialdehyde from L-glutamate: step 1/2. Functionally, catalyzes the transfer of a phosphate group to glutamate to form L-glutamate 5-phosphate. The polypeptide is Glutamate 5-kinase (Haemophilus influenzae (strain ATCC 51907 / DSM 11121 / KW20 / Rd)).